The chain runs to 258 residues: (7aS)-7a-methyl-1,5-dioxo-2,3,5,6,7,7a-hexahydro-1H-indene-carboxyl-CoA hydrolase (258 aa).

This sequence belongs to the enoyl-CoA hydratase/isomerase family.

It catalyses the reaction (7aS)-7a-methyl-1,5-dioxo-2,3,5,6,7,7a-hexahydro-1H-indene-carboxyl-CoA + H2O = (3E)-2-(2-carboxylatoethyl)-3-methyl-6-oxocyclohex-1-ene-1-carboxyl-CoA + H(+). It participates in steroid metabolism; cholesterol degradation. Its function is as follows. Involved in the final steps of cholesterol and steroid degradation. Catalyzes the hydrolytic ring D opening of (7aS)-7a-methyl-1,5-dioxo-2,3,5,6,7,7a-hexahydro-1H-indene-carboxyl-CoA (HIEC-CoA) to (3E)-2-(2-carboxylatoethyl)-3-methyl-6-oxocyclohex-1-ene-1-carboxyl-CoA (COCHEA-CoA). This Rhodococcus jostii (strain RHA1) protein is (7aS)-7a-methyl-1,5-dioxo-2,3,5,6,7,7a-hexahydro-1H-indene-carboxyl-CoA hydrolase.